A 216-amino-acid chain; its full sequence is Transmembrane emp24 domain-containing protein eca (216 aa).

The first 20 residues, 1–20 (MRDQFISLALILCVLHSACG), serve as a signal peptide directing secretion. The Lumenal portion of the chain corresponds to 21–182 (LYFHISETER…FRHTSESTNS (162 aa)). The GOLD domain occupies 30–126 (RKCFIEEVPD…QLRVHLDIQV (97 aa)). The stretch at 134–164 (ANVAQKEKLTELQLRIRQLLDQVEQITKEQN) forms a coiled coil. A helical membrane pass occupies residues 183–203 (RVLWWSLAQTVVLVCMGFWQM). Topologically, residues 204 to 216 (RHLKSFFEAKKLV) are cytoplasmic. Residues 213-216 (KKLV) carry the Prevents secretion from ER motif.

Belongs to the EMP24/GP25L family.

It is found in the endoplasmic reticulum membrane. Eca and bai are essential, though not redundant, for dorsoventral patterning of the embryo. Specifically required during early embryogenesis for the activity of maternal tkv, while the zygotic tkv is not affected. Involved in Golgi organization. The protein is Transmembrane emp24 domain-containing protein eca of Drosophila simulans (Fruit fly).